The sequence spans 158 residues: Putative metalloproteinase inhibitor tag-225 (158 aa).

An N-terminal signal peptide occupies residues 1 to 20 (MQNLSLSLVILSVLIAVTLA). C21 contributes to the Zn(2+) binding site. An involved in metalloproteinase-binding region spans residues 21 to 25 (CKCRE). Intrachain disulfides connect C21–C96, C23–C123, and C33–C158. The NTR domain occupies 21–158 (CKCREQSTKE…LQSQVKSIKC (138 aa)). N79 carries an N-linked (GlcNAc...) asparagine glycan. Positions 93-94 (AP) are involved in metalloproteinase-binding.

This sequence belongs to the protease inhibitor I35 (TIMP) family.

Its subcellular location is the secreted. Complexes with metalloproteinases and irreversibly inactivates them by binding to their catalytic zinc cofactor. The polypeptide is Putative metalloproteinase inhibitor tag-225 (tag-225) (Caenorhabditis elegans).